A 94-amino-acid polypeptide reads, in one-letter code: Defensin alpha 5 (94 aa).

The N-terminal stretch at methionine 1 to alanine 19 is a signal peptide. Intrachain disulfides connect cysteine 65/cysteine 93, cysteine 67/cysteine 82, and cysteine 72/cysteine 92.

Belongs to the alpha-defensin family. In terms of assembly, homodimer. Homotetramer. Interacts with B.antracis lef/lethal factor. Post-translationally, glycosylated. Proteolytically cleaved at Arg-62 by trypsin. Both the propeptide form proHD5/HD5(20-94) and HD5(56-94) are cleaved into the lumenal peptide form HD5(63-94) by trypsin. Unprocessed proHD5 exerts antimicrobial activities, but peptide potency is enhanced by peptide processing. Proteolytically cleaved in duodenal fluid; derived fragments are antimicrobially active against commensal bacteria (in vitro).

It is found in the secreted. The protein localises to the cytoplasmic vesicle. The protein resides in the secretory vesicle. Its function is as follows. Host-defense peptide that maintains sterility in the urogenital system. Has antimicrobial activity against a wide range of bacteria, including Gram-negative E.coli, P.aeruginosa and S.typhimurium, and Gram-positive E.aerogenes, S.aureus, B.cereus, E.faecium and L.monocytogenes. Confers resistance to intestinal infection by S.typhimurium. Exhibits antimicrobial activity against enteric commensal bacteria such as B.adolescentis, L.acidophilus, B.breve, L.fermentum, B.longum and S.thermophilus. Binds to bacterial membranes and causes membrane disintegration. Induces the secretion of the chemokine IL-8 by intestinal epithelial cells. Binds to B.antracis lef/lethal factor, a major virulence factor from B.anthracis, and neutralizes its enzymatic activity. This Pan troglodytes (Chimpanzee) protein is Defensin alpha 5 (DEFA5).